Reading from the N-terminus, the 427-residue chain is POU domain protein CF1A (427 aa).

Disordered stretches follow at residues 39-77 (YMQH…GLGS), 196-217 (HHHM…TPTS), 288-309 (TTGS…KKRT), and 390-427 (HDMH…LAAH). The segment covering 49–66 (AAAAAAHHQLPSSPSPNG) has biased composition (low complexity). Residues 67-77 (QGNGGGLGLGS) show a composition bias toward gly residues. A POU-specific domain is found at 212 to 286 (EDTPTSDDLE…LLQKWLEEAD (75 aa)). Positions 304 to 363 (KRKKRTSIEVSVKGALEQHFHKQPKPSAQEITSLADSLQLEKEVVRVWFCNRRQKEKRMT) form a DNA-binding region, homeobox.

This sequence belongs to the POU transcription factor family. Class-3 subfamily. In terms of tissue distribution, coexpressed with acj6 in overlapping subsets of neurons in the embryonic epidermis and central nervous system. First detected in the precursor of the tracheal pits and the stomodeal invagination and later in the peripheral nervous system.

Its subcellular location is the nucleus. Binds to a DNA sequence element required for the expression of the dopa decarboxylase gene (Ddc) in specific dopaminergic neurons. Could also play an early role in specific ectodermal cells, and a subsequent role in the embryonic nervous system. The chain is POU domain protein CF1A (vvl) from Drosophila melanogaster (Fruit fly).